The following is a 584-amino-acid chain: Kinesin-like protein KIN-10C (584 aa).

Residues 11 to 324 enclose the Kinesin motor domain; sequence PVRVVLRVRP…VSLAARSRHV (314 aa). 99-106 is an ATP binding site; that stretch reads GATGSGKT. 2 disordered regions span residues 377 to 398 and 445 to 469; these read SMSHKKQSASGRVSGRGKAMDQ and DKTGSSLRKALSPISSNMDPQKQRT.

It belongs to the TRAFAC class myosin-kinesin ATPase superfamily. Kinesin family. KIN-10 subfamily.

In Oryza sativa subsp. japonica (Rice), this protein is Kinesin-like protein KIN-10C.